Here is a 422-residue protein sequence, read N- to C-terminus: 26S proteasome non-ATPase regulatory subunit 11 (422 aa).

At alanine 2 the chain carries N-acetylalanine. Phosphoserine occurs at positions 14 and 23. The PCI domain occupies 224–392; it reads DWKTAYSYFY…GVLIIFDEPP (169 aa). Lysine 274 participates in a covalent cross-link: Glycyl lysine isopeptide (Lys-Gly) (interchain with G-Cter in SUMO2).

This sequence belongs to the proteasome subunit S9 family. As to quaternary structure, component of the 19S proteasome regulatory particle complex. The 26S proteasome consists of a 20S core particle (CP) and two 19S regulatory subunits (RP). The regulatory particle is made of a lid composed of 9 subunits including PSMD11, a base containing 6 ATPases and few additional components.

Functionally, component of the 26S proteasome, a multiprotein complex involved in the ATP-dependent degradation of ubiquitinated proteins. This complex plays a key role in the maintenance of protein homeostasis by removing misfolded or damaged proteins, which could impair cellular functions, and by removing proteins whose functions are no longer required. Therefore, the proteasome participates in numerous cellular processes, including cell cycle progression, apoptosis, or DNA damage repair. In the complex, PSMD11 is required for proteasome assembly. Plays a key role in increased proteasome activity in embryonic stem cells (ESCs): its high expression in ESCs promotes enhanced assembly of the 26S proteasome, followed by higher proteasome activity. The chain is 26S proteasome non-ATPase regulatory subunit 11 (Psmd11) from Mus musculus (Mouse).